We begin with the raw amino-acid sequence, 121 residues long: Small ribosomal subunit protein uS13 (121 aa).

Residues His-91 to Lys-121 form a disordered region.

The protein belongs to the universal ribosomal protein uS13 family. Part of the 30S ribosomal subunit. Forms a loose heterodimer with protein S19. Forms two bridges to the 50S subunit in the 70S ribosome.

Its function is as follows. Located at the top of the head of the 30S subunit, it contacts several helices of the 16S rRNA. In the 70S ribosome it contacts the 23S rRNA (bridge B1a) and protein L5 of the 50S subunit (bridge B1b), connecting the 2 subunits; these bridges are implicated in subunit movement. Contacts the tRNAs in the A and P-sites. The polypeptide is Small ribosomal subunit protein uS13 (Bordetella petrii (strain ATCC BAA-461 / DSM 12804 / CCUG 43448)).